Here is a 304-residue protein sequence, read N- to C-terminus: Acetyl-coenzyme A carboxylase carboxyl transferase subunit beta (304 aa).

The CoA carboxyltransferase N-terminal domain maps to 52-304 (EVTKCPSCGV…TIFKVLNDII (253 aa)). Residues C56, C59, C75, and C78 each contribute to the Zn(2+) site. The C4-type zinc-finger motif lies at 56 to 78 (CPSCGVLSHKSEIRANMKMCSNC).

The protein belongs to the AccD/PCCB family. Acetyl-CoA carboxylase is a heterohexamer composed of biotin carboxyl carrier protein (AccB), biotin carboxylase (AccC) and two subunits each of ACCase subunit alpha (AccA) and ACCase subunit beta (AccD). Requires Zn(2+) as cofactor.

Its subcellular location is the cytoplasm. It catalyses the reaction N(6)-carboxybiotinyl-L-lysyl-[protein] + acetyl-CoA = N(6)-biotinyl-L-lysyl-[protein] + malonyl-CoA. Its pathway is lipid metabolism; malonyl-CoA biosynthesis; malonyl-CoA from acetyl-CoA: step 1/1. Component of the acetyl coenzyme A carboxylase (ACC) complex. Biotin carboxylase (BC) catalyzes the carboxylation of biotin on its carrier protein (BCCP) and then the CO(2) group is transferred by the transcarboxylase to acetyl-CoA to form malonyl-CoA. This Fusobacterium nucleatum subsp. nucleatum (strain ATCC 25586 / DSM 15643 / BCRC 10681 / CIP 101130 / JCM 8532 / KCTC 2640 / LMG 13131 / VPI 4355) protein is Acetyl-coenzyme A carboxylase carboxyl transferase subunit beta.